The following is a 466-amino-acid chain: Probable periplasmic serine protease do/HhoA-like (466 aa).

An N-terminal signal peptide occupies residues 1–29; it reads MKKTRFVLNSIALGLSVLSTSFVAHVAQA. Active-site charge relay system residues include histidine 120, aspartate 150, and serine 226. 2 consecutive PDZ domains span residues 270–361 and 367–458; these read ILEF…LRDG and KMKL…LRGD.

This sequence belongs to the peptidase S1C family.

It is found in the periplasm. The chain is Probable periplasmic serine protease do/HhoA-like from Haemophilus influenzae (strain ATCC 51907 / DSM 11121 / KW20 / Rd).